A 262-amino-acid chain; its full sequence is Acyl-[acyl-carrier-protein]--UDP-N-acetylglucosamine O-acyltransferase (262 aa).

Belongs to the transferase hexapeptide repeat family. LpxA subfamily. As to quaternary structure, homotrimer.

Its subcellular location is the cytoplasm. It carries out the reaction a (3R)-hydroxyacyl-[ACP] + UDP-N-acetyl-alpha-D-glucosamine = a UDP-3-O-[(3R)-3-hydroxyacyl]-N-acetyl-alpha-D-glucosamine + holo-[ACP]. Its pathway is glycolipid biosynthesis; lipid IV(A) biosynthesis; lipid IV(A) from (3R)-3-hydroxytetradecanoyl-[acyl-carrier-protein] and UDP-N-acetyl-alpha-D-glucosamine: step 1/6. Its function is as follows. Involved in the biosynthesis of lipid A, a phosphorylated glycolipid that anchors the lipopolysaccharide to the outer membrane of the cell. The protein is Acyl-[acyl-carrier-protein]--UDP-N-acetylglucosamine O-acyltransferase of Burkholderia multivorans (strain ATCC 17616 / 249).